A 568-amino-acid polypeptide reads, in one-letter code: Urease subunit alpha (568 aa).

Residues 130 to 568 (GGIDTHIHFI…LPMAQRYFLF (439 aa)) form the Urease domain. Ni(2+) contacts are provided by histidine 135, histidine 137, and lysine 218. Lysine 218 is subject to N6-carboxylysine. Histidine 220 contacts substrate. 2 residues coordinate Ni(2+): histidine 247 and histidine 273. Histidine 321 (proton donor) is an active-site residue. Residue aspartate 361 coordinates Ni(2+).

The protein belongs to the metallo-dependent hydrolases superfamily. Urease alpha subunit family. In terms of assembly, heterotrimer of UreA (gamma), UreB (beta) and UreC (alpha) subunits. Three heterotrimers associate to form the active enzyme. Requires Ni cation as cofactor. In terms of processing, carboxylation allows a single lysine to coordinate two nickel ions.

The protein localises to the cytoplasm. It carries out the reaction urea + 2 H2O + H(+) = hydrogencarbonate + 2 NH4(+). It participates in nitrogen metabolism; urea degradation; CO(2) and NH(3) from urea (urease route): step 1/1. The chain is Urease subunit alpha from Burkholderia pseudomallei (strain 1106a).